A 192-amino-acid chain; its full sequence is NF-kappa-B inhibitor-interacting Ras-like protein 1 (192 aa).

Positions 1–192 are small GTPase-like; it reads MGKGCKVVVC…KSKGTPSNDI (192 aa). GTP is bound at residue 11-18; that stretch reads GMASVGKT. The Effector region signature appears at 35-43; it reads TSDTQEDIY. GTP-binding positions include 61-65 and 120-123; these read DTRGL and NKCE. Residues 169 to 192 form a disordered region; that stretch reads TQPQSKSAFPLPGRKSKGTPSNDI.

It belongs to the small GTPase superfamily. Ras family. KappaB-Ras subfamily.

Its subcellular location is the cytoplasm. Its function is as follows. Atypical Ras-like protein that acts as a potent regulator of NF-kappa-B activity by preventing the degradation of NF-kappa-B inhibitor beta (NFKBIB) by most signals, explaining why NFKBIB is more resistant to degradation. The chain is NF-kappa-B inhibitor-interacting Ras-like protein 1 (nkiras1) from Danio rerio (Zebrafish).